The following is a 918-amino-acid chain: Chitin synthase C (918 aa).

Positions 1-63 are disordered; it reads MSYNRLGDPY…EMPSSDRLAE (63 aa). Residues 22–37 show a composition bias toward low complexity; it reads NPSSLSNRSPSPGRPL. 4 helical membrane passes run 562–581, 605–625, 637–657, and 672–692; these read WLNGSFFAAVYAITHFYQLW, LFAWFGIGNFFLVFHILTTYL, VLGVVFEWLYLATLVTCFVLS, and MVYLWVFIMIYLAFAAVFVTV. An N-linked (GlcNAc...) asparagine glycan is attached at asparagine 712. Transmembrane regions (helical) follow at residues 715-735, 845-865, and 890-910; these read FFSIIVSLGSTYVMWFIASII, VVLVWVFCNFALGAVVLSSAG, and VVLWSVAGLSIFKFLGAMWFL.

The protein belongs to the chitin synthase family. Class I subfamily. As to expression, mainly expressed in hyphae and conidiphores. Relatively strongly expressed in young cleistothecia and in mature ascospores, but negligible in Huelle cells.

It localises to the cell membrane. The protein localises to the cell septum. Its subcellular location is the cell tip. It carries out the reaction [(1-&gt;4)-N-acetyl-beta-D-glucosaminyl](n) + UDP-N-acetyl-alpha-D-glucosamine = [(1-&gt;4)-N-acetyl-beta-D-glucosaminyl](n+1) + UDP + H(+). Polymerizes chitin, a structural polymer of the cell wall and septum, by transferring the sugar moiety of UDP-GlcNAc to the non-reducing end of the growing chitin polymer. ChsC and chsA share critical functions in hyphal wall integrity and differentiation. ChsA and chsC share also overlapping roles in septum formation. The chain is Chitin synthase C from Emericella nidulans (strain FGSC A4 / ATCC 38163 / CBS 112.46 / NRRL 194 / M139) (Aspergillus nidulans).